Reading from the N-terminus, the 1925-residue chain is Plexin-D1 (1925 aa).

The span at 1–18 (MAPRAAGGAPLSARAAAA) shows a compositional bias: low complexity. Positions 1 to 23 (MAPRAAGGAPLSARAAAASPPPF) are disordered. An N-terminal signal peptide occupies residues 1 to 46 (MAPRAAGGAPLSARAAAASPPPFQTPPRCPVPLLLLLLLGAARAGA). The 500-residue stretch at 47–546 (LEIQRRFPSP…TSHQMARVKV (500 aa)) folds into the Sema domain. The Extracellular portion of the chain corresponds to 47–1271 (LEIQRRFPSP…TLQLGGSETA (1225 aa)). Asparagine 86 is a glycosylation site (N-linked (GlcNAc...) asparagine). Intrachain disulfides connect cysteine 104–cysteine 114 and cysteine 140–cysteine 148. N-linked (GlcNAc...) asparagine glycosylation is found at asparagine 155, asparagine 188, and asparagine 224. 2 disulfide bridges follow: cysteine 322–cysteine 445 and cysteine 345–cysteine 389. 2 N-linked (GlcNAc...) asparagine glycosylation sites follow: asparagine 481 and asparagine 500. 5 disulfides stabilise this stretch: cysteine 549–cysteine 566, cysteine 555–cysteine 600, cysteine 558–cysteine 575, cysteine 569–cysteine 581, and cysteine 637–cysteine 661. A glycan (N-linked (GlcNAc...) asparagine) is linked at asparagine 583. Residues asparagine 696, asparagine 736, asparagine 802, asparagine 965, asparagine 1017, asparagine 1060, asparagine 1099, asparagine 1118, asparagine 1132, asparagine 1237, and asparagine 1257 are each glycosylated (N-linked (GlcNAc...) asparagine). IPT/TIG domains lie at 891 to 979 (PEIH…FSYV), 981 to 1066 (PLVH…FWYM), and 1069 to 1160 (PVIT…LDPE). A helical membrane pass occupies residues 1272–1292 (IIVSIVICSVLLLLSVVALFV). Over 1293–1925 (FCTKSRRAER…DNIYECYSEA (633 aa)) the chain is Cytoplasmic.

The protein belongs to the plexin family. As to quaternary structure, interacts with NRP1 and SEMA4A. Interacts with SH3BP1; they dissociate upon SEMA3E binding to PLXND1 allowing SH3BP1 to transduce downstream signal through RAC1 inactivation. In terms of tissue distribution, detected at low levels in heart, placenta, lung, skeletal muscle, kidney, thymus and liver. Detected at very low levels in brain, colon, spleen, small intestine and peripheral blood leukocytes.

Its subcellular location is the cell membrane. The protein localises to the cell projection. It is found in the lamellipodium membrane. In terms of biological role, cell surface receptor for SEMA4A and for class 3 semaphorins, such as SEMA3A, SEMA3C and SEMA3E. Plays an important role in cell-cell signaling, and in regulating the migration of a wide spectrum of cell types. Regulates the migration of thymocytes in the medulla. Regulates endothelial cell migration. Plays an important role in ensuring the specificity of synapse formation. Required for normal development of the heart and vasculature. Mediates anti-angiogenic signaling in response to SEMA3E. In Homo sapiens (Human), this protein is Plexin-D1 (PLXND1).